Consider the following 423-residue polypeptide: D-tagatose-1,6-bisphosphate aldolase subunit GatZ (423 aa).

It belongs to the GatZ/KbaZ family. GatZ subfamily. In terms of assembly, forms a complex with GatY.

Its pathway is carbohydrate metabolism; D-tagatose 6-phosphate degradation; D-glyceraldehyde 3-phosphate and glycerone phosphate from D-tagatose 6-phosphate: step 2/2. In terms of biological role, component of the tagatose-1,6-bisphosphate aldolase GatYZ that is required for full activity and stability of the Y subunit. Could have a chaperone-like function for the proper and stable folding of GatY. When expressed alone, GatZ does not show any aldolase activity. Is involved in the catabolism of galactitol. The chain is D-tagatose-1,6-bisphosphate aldolase subunit GatZ from Salmonella choleraesuis (strain SC-B67).